Here is a 280-residue protein sequence, read N- to C-terminus: Vitamin B12-binding protein (280 aa).

An N-terminal signal peptide occupies residues 1-27 (MMPLGLFPLPRAAAVLLISLLTLPAQA). A Fe/B12 periplasmic-binding domain is found at 30-277 (RVISLSPSTT…QMASIPTPVA (248 aa)). A cyanocob(III)alamin-binding site is contributed by Y57. A disulfide bond links C190 and C266.

The protein belongs to the BtuF family. As to quaternary structure, the complex is composed of two ATP-binding proteins (BtuD), two transmembrane proteins (BtuC) and a solute-binding protein (BtuF).

It is found in the periplasm. In terms of biological role, part of the ABC transporter complex BtuCDF involved in vitamin B12 import. Binds vitamin B12 and delivers it to the periplasmic surface of BtuC. In Yersinia pseudotuberculosis serotype O:3 (strain YPIII), this protein is Vitamin B12-binding protein.